We begin with the raw amino-acid sequence, 128 residues long: Phosphoribosyl-AMP cyclohydrolase (128 aa).

D89 lines the Mg(2+) pocket. C90 contributes to the Zn(2+) binding site. D91 and D93 together coordinate Mg(2+). 2 residues coordinate Zn(2+): C106 and C113.

It belongs to the PRA-CH family. In terms of assembly, homodimer. Mg(2+) serves as cofactor. It depends on Zn(2+) as a cofactor.

The protein localises to the cytoplasm. It carries out the reaction 1-(5-phospho-beta-D-ribosyl)-5'-AMP + H2O = 1-(5-phospho-beta-D-ribosyl)-5-[(5-phospho-beta-D-ribosylamino)methylideneamino]imidazole-4-carboxamide. It participates in amino-acid biosynthesis; L-histidine biosynthesis; L-histidine from 5-phospho-alpha-D-ribose 1-diphosphate: step 3/9. Functionally, catalyzes the hydrolysis of the adenine ring of phosphoribosyl-AMP. In Pyrobaculum calidifontis (strain DSM 21063 / JCM 11548 / VA1), this protein is Phosphoribosyl-AMP cyclohydrolase.